A 263-amino-acid polypeptide reads, in one-letter code: Probable 6-oxopurine nucleoside phosphorylase (263 aa).

Phosphate contacts are provided by residues T9, 49–50 (RH), and 82–83 (TA). Substrate is bound at residue M181. T182 provides a ligand contact to phosphate. 205 to 207 (NYA) serves as a coordination point for substrate.

It belongs to the PNP/MTAP phosphorylase family. MTAP subfamily. In terms of assembly, homohexamer. Dimer of a homotrimer.

It catalyses the reaction a purine D-ribonucleoside + phosphate = a purine nucleobase + alpha-D-ribose 1-phosphate. It participates in purine metabolism; purine nucleoside salvage. Purine nucleoside phosphorylase which is highly specific for 6-oxopurine nucleosides. Cleaves guanosine or inosine to respective bases and sugar-1-phosphate molecules. Involved in purine salvage. This is Probable 6-oxopurine nucleoside phosphorylase from Dictyoglomus turgidum (strain DSM 6724 / Z-1310).